Reading from the N-terminus, the 209-residue chain is Uracil phosphoribosyltransferase (209 aa).

5-phospho-alpha-D-ribose 1-diphosphate-binding positions include Arg-79, Arg-104, and 131 to 139; that span reads DPMLATGGS. Uracil-binding positions include Ile-194 and 199–201; that span reads GDA. Asp-200 serves as a coordination point for 5-phospho-alpha-D-ribose 1-diphosphate.

Belongs to the UPRTase family. Mg(2+) serves as cofactor.

The enzyme catalyses UMP + diphosphate = 5-phospho-alpha-D-ribose 1-diphosphate + uracil. It functions in the pathway pyrimidine metabolism; UMP biosynthesis via salvage pathway; UMP from uracil: step 1/1. Its activity is regulated as follows. Allosterically activated by GTP. Its function is as follows. Catalyzes the conversion of uracil and 5-phospho-alpha-D-ribose 1-diphosphate (PRPP) to UMP and diphosphate. The polypeptide is Uracil phosphoribosyltransferase (Geobacter sulfurreducens (strain ATCC 51573 / DSM 12127 / PCA)).